Here is a 347-residue protein sequence, read N- to C-terminus: UDP-N-acetylenolpyruvoylglucosamine reductase (347 aa).

The 175-residue stretch at 23-197 (LPARAARLLR…LRVRFRLPQA (175 aa)) folds into the FAD-binding PCMH-type domain. Arginine 174 is a catalytic residue. Serine 247 acts as the Proton donor in catalysis. Glutamate 343 is an active-site residue.

The protein belongs to the MurB family. It depends on FAD as a cofactor.

The protein localises to the cytoplasm. The catalysed reaction is UDP-N-acetyl-alpha-D-muramate + NADP(+) = UDP-N-acetyl-3-O-(1-carboxyvinyl)-alpha-D-glucosamine + NADPH + H(+). The protein operates within cell wall biogenesis; peptidoglycan biosynthesis. Functionally, cell wall formation. The protein is UDP-N-acetylenolpyruvoylglucosamine reductase of Azoarcus sp. (strain BH72).